Reading from the N-terminus, the 473-residue chain is Bestrophin-4 (473 aa).

Residues 1 to 31 are Cytoplasmic-facing; that stretch reads MTVSYTLKVAEARFGGFSGLLLRWRGSIYKL. Ca(2+) is bound at residue alanine 10. Residues 32 to 51 traverse the membrane as a helical segment; that stretch reads LYKEFLLFGALYAVLSITYR. Residues 52-60 are Extracellular-facing; it reads LLLTQEQRY. A helical membrane pass occupies residues 61–82; that stretch reads VYAQVARYCNRSADLIPLSFVL. The Cytoplasmic portion of the chain corresponds to 83–237; it reads GFYVTLVVNR…DWISIPLVYT (155 aa). Residues 238-255 traverse the membrane as a helical segment; it reads QVVTIAVYSFFALSLVGR. Over 256 to 289 the chain is Extracellular; it reads QFVEPEAGAAKPQKLLKPGQEPAPALGDPDMYVP. Residues 290-303 form a helical membrane-spanning segment; sequence LTTLLQFFFYAGWL. Topologically, residues 304-473 are cytoplasmic; sequence KVAEQIINPF…AESGDEALEP (170 aa). The Ca(2+) site is built by glutamine 308, asparagine 311, aspartate 316, and aspartate 319. Disordered regions lie at residues 379-408 and 428-473; these read TFNL…PAAQ and RNFG…ALEP. The segment covering 396–407 has biased composition (low complexity); it reads ASPGSGRPAPAA. The span at 445-461 shows a compositional bias: basic and acidic residues; the sequence is FRAEEGGDPEAAARIEE. A compositionally biased stretch (acidic residues) spans 462-473; it reads ESAESGDEALEP.

It belongs to the anion channel-forming bestrophin (TC 1.A.46) family. Calcium-sensitive chloride channel subfamily. As to expression, predominantly found in colon and the weakly in fetal brain, spinal cord, retina, lung, trachea, testis and placenta.

It is found in the cell membrane. It catalyses the reaction chloride(in) = chloride(out). The catalysed reaction is hydrogencarbonate(in) = hydrogencarbonate(out). Its function is as follows. Ligand-gated anion channel that allows the movement of anions across cell membranes when activated by Calcium (Ca2+). Mediates the movement of hydrogencarbonate and chloride. The sequence is that of Bestrophin-4 from Homo sapiens (Human).